The sequence spans 1136 residues: Nuclear pore complex protein Nup133 (1136 aa).

The segment at 1–26 (MFSPRGTPGSGRRQAPRTGGRRSVSA) is disordered.

Belongs to the nucleoporin Nup133 family. In terms of assembly, forms part of the Nup160 subcomplex in the nuclear pore which is composed of NUP160, NUP133, NUP107 and Nup96. This complex plays a role in RNA export and in tethering Nup98 and NUP153 to the nucleus. As to expression, widely expressed in the embryo and in adult tissues. Higher expression is observed in the brain, testes, ovary, skin, and kidney.

It localises to the nucleus. Its subcellular location is the nuclear pore complex. The protein resides in the chromosome. The protein localises to the centromere. It is found in the kinetochore. Its function is as follows. Involved in poly(A)+ RNA transport. Involved in nephrogenesis. The sequence is that of Nuclear pore complex protein Nup133 from Danio rerio (Zebrafish).